The chain runs to 630 residues: 1-deoxy-D-xylulose-5-phosphate synthase (630 aa).

Thiamine diphosphate contacts are provided by residues His87 and 128–130 (GHS). Residue Asp159 coordinates Mg(2+). Thiamine diphosphate contacts are provided by residues 160-161 (GA), Asn188, Phe295, and Glu377. Asn188 lines the Mg(2+) pocket.

It belongs to the transketolase family. DXPS subfamily. As to quaternary structure, homodimer. Mg(2+) is required as a cofactor. The cofactor is thiamine diphosphate.

It carries out the reaction D-glyceraldehyde 3-phosphate + pyruvate + H(+) = 1-deoxy-D-xylulose 5-phosphate + CO2. It participates in metabolic intermediate biosynthesis; 1-deoxy-D-xylulose 5-phosphate biosynthesis; 1-deoxy-D-xylulose 5-phosphate from D-glyceraldehyde 3-phosphate and pyruvate: step 1/1. Catalyzes the acyloin condensation reaction between C atoms 2 and 3 of pyruvate and glyceraldehyde 3-phosphate to yield 1-deoxy-D-xylulose-5-phosphate (DXP). The sequence is that of 1-deoxy-D-xylulose-5-phosphate synthase from Pseudomonas savastanoi pv. phaseolicola (strain 1448A / Race 6) (Pseudomonas syringae pv. phaseolicola (strain 1448A / Race 6)).